A 98-amino-acid polypeptide reads, in one-letter code: Large ribosomal subunit protein uL23 (98 aa).

This sequence belongs to the universal ribosomal protein uL23 family. As to quaternary structure, part of the 50S ribosomal subunit. Contacts protein L29, and trigger factor when it is bound to the ribosome.

Functionally, one of the early assembly proteins it binds 23S rRNA. One of the proteins that surrounds the polypeptide exit tunnel on the outside of the ribosome. Forms the main docking site for trigger factor binding to the ribosome. The sequence is that of Large ribosomal subunit protein uL23 from Streptococcus pneumoniae serotype 19F (strain G54).